The sequence spans 260 residues: Triosephosphate isomerase (260 aa).

Position 10-12 (10-12 (NWK)) interacts with substrate. Histidine 100 serves as the catalytic Electrophile. Glutamate 172 acts as the Proton acceptor in catalysis. Substrate-binding positions include glycine 178, serine 218, and 239–240 (GG).

Belongs to the triosephosphate isomerase family. Homodimer.

The protein resides in the cytoplasm. It carries out the reaction D-glyceraldehyde 3-phosphate = dihydroxyacetone phosphate. The protein operates within carbohydrate biosynthesis; gluconeogenesis. Its pathway is carbohydrate degradation; glycolysis; D-glyceraldehyde 3-phosphate from glycerone phosphate: step 1/1. Functionally, involved in the gluconeogenesis. Catalyzes stereospecifically the conversion of dihydroxyacetone phosphate (DHAP) to D-glyceraldehyde-3-phosphate (G3P). The protein is Triosephosphate isomerase of Corynebacterium diphtheriae (strain ATCC 700971 / NCTC 13129 / Biotype gravis).